Consider the following 186-residue polypeptide: ADP-ribosylation factor-like protein 8A (186 aa).

The segment at residues 1–19 (MIALFNKLLDWFKALFWKE) is an intramembrane region (note=Mediates targeting to membranes). GTP-binding positions include 29-35 (QYSGKTT), 71-75 (DIGGQ), and 130-133 (NKRD).

Belongs to the small GTPase superfamily. Arf family. In terms of assembly, interacts with PLEKHM1. When GTP-bound, interacts with RUFY3 and RUFY4, but not with RUFY1, nor RUFY2. Ubiquitously expressed.

It is found in the late endosome membrane. The protein localises to the lysosome membrane. It localises to the cytoplasm. The protein resides in the cytoskeleton. Its subcellular location is the spindle. It is found in the cell projection. The protein localises to the axon. It localises to the synapse. Functionally, plays a role in lysosome motility. In neurons, mediates the anterograde axonal long-range transport of presynaptic lysosome-related vesicles required for presynaptic biogenesis and synaptic function. May play a role in chromosome segregation. This is ADP-ribosylation factor-like protein 8A (ARL8A) from Homo sapiens (Human).